The chain runs to 364 residues: Phosphoserine aminotransferase (364 aa).

Arginine 41 provides a ligand contact to L-glutamate. Pyridoxal 5'-phosphate is bound by residues 75 to 76 (AS), tryptophan 100, threonine 155, aspartate 175, and glutamine 198. Lysine 199 bears the N6-(pyridoxal phosphate)lysine mark. 239–240 (NT) is a pyridoxal 5'-phosphate binding site.

This sequence belongs to the class-V pyridoxal-phosphate-dependent aminotransferase family. SerC subfamily. As to quaternary structure, homodimer. Pyridoxal 5'-phosphate is required as a cofactor.

It localises to the cytoplasm. It carries out the reaction O-phospho-L-serine + 2-oxoglutarate = 3-phosphooxypyruvate + L-glutamate. It catalyses the reaction 4-(phosphooxy)-L-threonine + 2-oxoglutarate = (R)-3-hydroxy-2-oxo-4-phosphooxybutanoate + L-glutamate. Its pathway is amino-acid biosynthesis; L-serine biosynthesis; L-serine from 3-phospho-D-glycerate: step 2/3. Catalyzes the reversible conversion of 3-phosphohydroxypyruvate to phosphoserine and of 3-hydroxy-2-oxo-4-phosphonooxybutanoate to phosphohydroxythreonine. The polypeptide is Phosphoserine aminotransferase (Streptococcus thermophilus (strain CNRZ 1066)).